Here is a 396-residue protein sequence, read N- to C-terminus: Calreticulin (396 aa).

The N-terminal stretch at 1 to 15 (MKSLCLLAIVAVVSA) is a signal peptide. A disulfide bridge connects residues Cys-101 and Cys-133. An alpha-D-glucoside contacts are provided by Tyr-105, Lys-107, Tyr-124, and Asp-131. 7 tandem repeats follow at residues 186–197 (AQTGSLEEDWDL), 205–216 (DPDAKKPEDWDE), 222–233 (DAEDVKPEDWEK), 239–250 (DPDAKKPEDWDD), 254–264 (GEWEPPMIDNP), 268–278 (GEWKPKQIKNP), and 282–292 (GKWIHPEIENP). The tract at residues 186–250 (AQTGSLEEDW…DAKKPEDWDD (65 aa)) is 4 X approximate repeats. The P-domain stretch occupies residues 193-301 (EDWDLLPAKK…PEYTPDDELY (109 aa)). Residues 202–212 (KIKDPDAKKPE) are compositionally biased toward basic and acidic residues. The interval 202–250 (KIKDPDAKKPEDWDEREYIDDAEDVKPEDWEKPEHIPDPDAKKPEDWDD) is disordered. Residues 213-224 (DWDEREYIDDAE) are compositionally biased toward acidic residues. Residues 225 to 246 (DVKPEDWEKPEHIPDPDAKKPE) show a composition bias toward basic and acidic residues. The segment at 254 to 292 (GEWEPPMIDNPEYKGEWKPKQIKNPAYKGKWIHPEIENP) is 3 X approximate repeats. Positions 302–396 (LYENWGAIGF…KEEEEGHDEL (95 aa)) are C-domain. Asp-312 contacts an alpha-D-glucoside. Over residues 342-380 (FDKLKTVEKEKKEKADEEARKVEEEARKKAEEEKEAKKD) the composition is skewed to basic and acidic residues. The segment at 342 to 396 (FDKLKTVEKEKKEKADEEARKVEEEARKKAEEEKEAKKDDDEEEEKEEEEGHDEL) is disordered. A compositionally biased stretch (acidic residues) spans 381–396 (DDEEEEKEEEEGHDEL). The Prevents secretion from ER signature appears at 393–396 (HDEL).

This sequence belongs to the calreticulin family.

It localises to the endoplasmic reticulum lumen. Molecular calcium-binding chaperone promoting folding, oligomeric assembly and quality control in the ER via the calreticulin/calnexin cycle. This lectin may interact transiently with almost all of the monoglucosylated glycoproteins that are synthesized in the ER. Probably by controlling the folding of extracellular matrix protein unc-52/Perlecan, may play a role in the formation of fibrous organelles, a hemidesmosome-like structure attaching muscles to the epidermis. Protects dopaminergic neurons against oxidative stress-induced neurodegeneration. This Caenorhabditis briggsae protein is Calreticulin (crt-1).